A 120-amino-acid polypeptide reads, in one-letter code: Small ribosomal subunit protein uS19 (120 aa).

The protein belongs to the universal ribosomal protein uS19 family.

In Naegleria gruberi (Amoeba), this protein is Small ribosomal subunit protein uS19 (RPS15).